Consider the following 154-residue polypeptide: Nuclear cap-binding protein subunit 2 (154 aa).

The interval Met1–Glu23 is disordered. Residues Ser9 to Glu23 are compositionally biased toward basic and acidic residues. MRNA contacts are provided by residues Tyr10, Tyr33, Arg102–Asp106, Arg113–Arg117, and Gln123–Val124. The RRM domain maps to Thr30–Gly108.

This sequence belongs to the RRM NCBP2 family. In terms of assembly, component of the nuclear cap-binding complex (CBC), a heterodimer composed of Cbp80 and Cbp20 that interacts with m7GpppG-capped RNA. Interacts with Ars2.

The protein resides in the nucleus. In terms of biological role, component of the cap-binding complex (CBC), which binds co-transcriptionally to the 5' cap of pre-mRNAs and is involved in various processes such as pre-mRNA splicing and RNA-mediated gene silencing (RNAi). The CBC complex is involved in miRNA-mediated RNA interference via its interaction with Ars2 and is required for primary microRNAs (miRNAs) processing. Also involved in innate immunity via the short interfering RNAs (siRNAs) processing machinery by restricting the viral RNA production. In the CBC complex, Cbp20 recognizes and binds capped RNAs (m7GpppG-capped RNA) but requires Cbp80 to stabilize the movement of its N-terminal loop and lock the CBC into a high affinity cap-binding state with the cap structure. This is Nuclear cap-binding protein subunit 2 (Cbp20) from Drosophila ananassae (Fruit fly).